Consider the following 688-residue polypeptide: Glycine--tRNA ligase beta subunit (688 aa).

The protein belongs to the class-II aminoacyl-tRNA synthetase family. Tetramer of two alpha and two beta subunits.

It localises to the cytoplasm. The catalysed reaction is tRNA(Gly) + glycine + ATP = glycyl-tRNA(Gly) + AMP + diphosphate. This Histophilus somni (strain 2336) (Haemophilus somnus) protein is Glycine--tRNA ligase beta subunit.